A 687-amino-acid chain; its full sequence is MHGRKREEDPNPEETAAKALELRSLQSQFMSNHHQKIYTKEAIQLSAKLLITNPEFYTAWNYPKLAFESRLDEDSDPSLVNSIIDEELGVVQNALERNVKSYGAWYHRKWVLSKKGHYYPSLENELQLLNDYQKQAHQKQDDEKQDDPSRNFHAWNYRRFVVELTKTSEEDELQYTTDMISDISFTIYSAWHYRSVLVSSLVAKKADGFMPKETIRRELDYVHSAIFTLEEKQSGWFYYLWLLDQTVKMEIPLRFSSWPSDGSIIILSGPDCFNASSSTTKLTTFCSESGSFPLILYFDQAVSGVSSSTVTIGSELKDLVWEPVSDKKNSQVDSCVWVARLKFDCREPCFSRKETKVKVSLGGIVSSMGCNLTAPYEFVFTLRIHDTVEVELSQQESIVSWTDGFDNWDDNALSNDLNSLTALNADTGFEWRKKAIKIEIELFRTLPDSKIGKLILARLLMAEETMISNGVHYKEILQLYNDLMALDSWHNQYYKDEHSVALIHKVTSRTESMSRHLFRYRNMNNIICLRLNNLTLSRIAAVEKLLFVQMLDLSHNELHSAEGLEAMQLLCCLNLSHNRIRSFSALDSLRHLKQLRVLDVSHNHICGELPVDTTRYLCSSPLSNSGETGREVPNKYQDAYLVLRDLMKLKQLDIRGNDLIFAGEEFSSFVRQVVPKLVWLDGHKLTS.

PFTA repeat units lie at residues 38-72 (YTKEAIQLSAKLLITNPEFYTAWNYPKLAFESRLD), 83-117 (IIDEELGVVQNALERNVKSYGAWYHRKWVLSKKGH), 132-167 (YQKQAHQKQDDEKQDDPSRNFHAWNYRRFVVELTKT), 168-203 (SEEDELQYTTDMISDISFTIYSAWHYRSVLVSSLVA), and 214-248 (TIRRELDYVHSAIFTLEEKQSGWFYYLWLLDQTVK). LRR repeat units follow at residues 523 to 545 (MNNIICLRLNNLTLSRIAAVEKL), 546 to 567 (LFVQMLDLSHNELHSAEGLEAM), 568 to 591 (QLLCCLNLSHNRIRSFSALDSLRH), 592 to 616 (LKQLRVLDVSHNHICGELPVDTTRY), and 646 to 668 (LMKLKQLDIRGNDLIFAGEEFSS).

It belongs to the protein prenyltransferase subunit alpha family. In terms of assembly, heterotrimer composed of the alpha subunit RGTA, the beta subunit RGTB and REP; within this trimer, RGTA and RGTB form the catalytic component, while REP mediates peptide substrate binding.

The catalysed reaction is geranylgeranyl diphosphate + L-cysteinyl-[protein] = S-geranylgeranyl-L-cysteinyl-[protein] + diphosphate. With respect to regulation, the enzymatic reaction requires the aid of the Rab escort protein REP. Its function is as follows. Catalyzes the transfer of a geranylgeranyl moiety from geranylgeranyl diphosphate to both cysteines of Rab proteins with the C-terminal sequence -CCXX, CXXX, -XCCX and -XCXC, such as RABA1A, RABA2A, RABF2A and RABG2. Does not seem to be a functional Rab-GGT alpha subunit in vitro. This Arabidopsis thaliana (Mouse-ear cress) protein is Geranylgeranyl transferase type-2 subunit alpha 2.